Here is a 355-residue protein sequence, read N- to C-terminus: D-alanine--D-alanine ligase (355 aa).

An ATP-grasp domain is found at lysine 143–aspartate 350. Leucine 178 to glutamate 233 is a binding site for ATP. Mg(2+) is bound by residues aspartate 303, glutamate 317, and asparagine 319.

This sequence belongs to the D-alanine--D-alanine ligase family. It depends on Mg(2+) as a cofactor. Mn(2+) is required as a cofactor.

It localises to the cytoplasm. The enzyme catalyses 2 D-alanine + ATP = D-alanyl-D-alanine + ADP + phosphate + H(+). It functions in the pathway cell wall biogenesis; peptidoglycan biosynthesis. Functionally, cell wall formation. In Prochlorococcus marinus (strain MIT 9215), this protein is D-alanine--D-alanine ligase.